The primary structure comprises 479 residues: F-box protein At5g51380 (479 aa).

Positions 1-20 (MTFREKMPTSPKSPLRRRRS) are disordered. The F-box domain maps to 62-108 (DRTLSLSDSLLLKILEKLPESQNEDVSLVCKRWLSVQGRRLRSMKVF).

This is F-box protein At5g51380 from Arabidopsis thaliana (Mouse-ear cress).